The sequence spans 406 residues: Accessory Sec system protein translocase subunit SecY2 (406 aa).

10 helical membrane-spanning segments follow: residues 14 to 34 (SWTV…LPFI), 63 to 83 (FSLF…WQMF), 108 to 128 (FAIA…EVGI), 131 to 151 (GLAI…LVWL), 156 to 176 (SFFG…ANLP), 190 to 210 (LPII…AVIV), 246 to 266 (FMYA…IQIL), 285 to 305 (PIWL…FAFV), 344 to 364 (AVIG…IVLI), and 368 to 388 (YLQL…VYNV).

This sequence belongs to the SecY/SEC61-alpha family. SecY2 subfamily. As to quaternary structure, component of the accessory SecA2/SecY2 protein translocase complex required to export cell wall proteins. May form heterotrimers with SecE and SecG subunits.

The protein resides in the cell membrane. In terms of biological role, part of the accessory SecA2/SecY2 system specifically required for export of possible cell wall proteins. The central subunit of a protein translocation channel. This is Accessory Sec system protein translocase subunit SecY2 from Streptococcus salivarius (strain CCHSS3).